Reading from the N-terminus, the 142-residue chain is Transcriptional regulator MraZ (142 aa).

2 consecutive SpoVT-AbrB domains span residues Thr-5–Thr-47 and Ala-76–Glu-119.

Belongs to the MraZ family. Forms oligomers.

The protein localises to the cytoplasm. It localises to the nucleoid. The chain is Transcriptional regulator MraZ from Cutibacterium acnes (strain DSM 16379 / KPA171202) (Propionibacterium acnes).